The chain runs to 306 residues: uncharacterized protein (306 aa).

Positions 13-39 (NMLNEIAANNNLLNNKNNQTNQLNNNQ) form a coiled coil. Disordered regions lie at residues 44–76 (YNNQ…HQQN), 103–204 (DSKE…QSGQ), and 216–249 (QKQL…TMQH). The segment covering 119 to 201 (HQQPIQNNPS…QFAQPNQYNQ (83 aa)) has biased composition (low complexity). Residues 218-235 (QLDKNQPEKIPSKPEKNQ) are compositionally biased toward basic and acidic residues. A helical transmembrane segment spans residues 279-299 (LFDYIIIPIALVLVFLFLVHP).

The protein localises to the membrane. This is an uncharacterized protein from Acanthamoeba polyphaga mimivirus (APMV).